The sequence spans 147 residues: Large ribosomal subunit protein uL15 (147 aa).

A compositionally biased stretch (basic and acidic residues) spans 1–20 (MTLRLNDLKPADGARTERTR). Residues 1–61 (MTLRLNDLKP…GFEGGQTPMQ (61 aa)) are disordered. Over residues 23–33 (RGIGSGLGKTA) the composition is skewed to gly residues. Positions 34–47 (GRGHKGSFARKGGG) are enriched in basic residues.

The protein belongs to the universal ribosomal protein uL15 family. Part of the 50S ribosomal subunit.

In terms of biological role, binds to the 23S rRNA. This is Large ribosomal subunit protein uL15 from Xanthomonas axonopodis pv. citri (strain 306).